Consider the following 122-residue polypeptide: Small ribosomal subunit protein uS13 (122 aa).

The segment at 97–122 is disordered; that stretch reads PVRGQRTKTNARTRKGPARTVAGKKK.

This sequence belongs to the universal ribosomal protein uS13 family. In terms of assembly, part of the 30S ribosomal subunit. Forms a loose heterodimer with protein S19. Forms two bridges to the 50S subunit in the 70S ribosome.

In terms of biological role, located at the top of the head of the 30S subunit, it contacts several helices of the 16S rRNA. In the 70S ribosome it contacts the 23S rRNA (bridge B1a) and protein L5 of the 50S subunit (bridge B1b), connecting the 2 subunits; these bridges are implicated in subunit movement. Contacts the tRNAs in the A and P-sites. This chain is Small ribosomal subunit protein uS13, found in Geobacter metallireducens (strain ATCC 53774 / DSM 7210 / GS-15).